The primary structure comprises 350 residues: Protein YIPF3 (350 aa).

Residues 1–10 (MATTAAPAGG) show a composition bias toward low complexity. The disordered stretch occupies residues 1–51 (MATTAAPAGGARNGAGPEWGGFEENIQGGGSAVIDMENMDDTSGSSFEDMG). The residue at position 2 (alanine 2) is an N-acetylalanine. Residues 2–148 (ATTAAPAGGA…PIKMVNFPQK (147 aa)) are Cytoplasmic-facing. Residues 149 to 169 (IAGELYGPLMLVFTLVAILLH) form a helical membrane-spanning segment. Residues 170–187 (GMKTSDTIIREGTLMGTA) are Lumenal-facing. Residues 188–208 (IGTCFGYWLGVSSFIYFLAYL) form a helical membrane-spanning segment. At 209-214 (CNAQIT) the chain is on the cytoplasmic side. The chain crosses the membrane as a helical span at residues 215–237 (MLQMLALLGYGLFGHCIVLFITY). The Lumenal portion of the chain corresponds to 238 to 240 (NIH). The helical transmembrane segment at 241 to 263 (LHALFYLFWLLVGGLSTLRMVAV) threads the bilayer. Residues 264-274 (LVSRTVGPTQR) lie on the Cytoplasmic side of the membrane. The chain crosses the membrane as a helical span at residues 275-295 (LLLCGTLAALHMLFLLYLHFA). Topologically, residues 296-350 (YHKVVEGILDTLEGPNIPPIQRVPRDIPAMLPAARLPTTVLNATAKAVAVTLQSH) are lumenal. Residues threonine 333 and threonine 334 are each glycosylated (O-linked (GalNAc...) threonine). Asparagine 337 carries an N-linked (GlcNAc...) asparagine glycan. Threonine 339 and threonine 346 each carry an O-linked (GalNAc...) threonine glycan.

This sequence belongs to the YIP1 family. In terms of assembly, interacts with YIPF4 and YIPF5. In terms of processing, N-glycosylated in the ER (40 kDa form I), then O-glycosylated in the Golgi apparatus (46 kDa form II), the C-terminal lumenal region is later removed in the Golgi apparatus to produce a 36 kDa form III. O-glycosylated with core 1-like and core 2-like glycans. O-glycan heterogeneity at Thr-346: HexNAc (minor), HexHexNAc (major), Hex1HexNAc2 (minor), Hex2HexNAc2 (minor) and dHex1Hex2HexNAc2 (minor). As to expression, expressed by nucleated hematopoietic cells (at protein level).

The protein localises to the cell membrane. The protein resides in the cytoplasm. It is found in the golgi apparatus. Its subcellular location is the cis-Golgi network membrane. Functionally, involved in the maintenance of the Golgi structure. May play a role in hematopoiesis. The protein is Protein YIPF3 (YIPF3) of Homo sapiens (Human).